The chain runs to 369 residues: Maltose/maltodextrin import ATP-binding protein MalK (369 aa).

The 231-residue stretch at 4–234 (VTLSSVYKAF…PANRFVAGFI (231 aa)) folds into the ABC transporter domain. 36 to 43 (GPSGCGKS) contributes to the ATP binding site.

The protein belongs to the ABC transporter superfamily. Maltooligosaccharide importer (TC 3.A.1.1.1) family. The complex is composed of two ATP-binding proteins (MalK), two transmembrane proteins (MalG and MalK) and a solute-binding protein (MalE).

The protein resides in the cell inner membrane. The catalysed reaction is D-maltose(out) + ATP + H2O = D-maltose(in) + ADP + phosphate + H(+). Its function is as follows. Part of the ABC transporter complex MalEFGK involved in maltose/maltodextrin import. Responsible for energy coupling to the transport system. The polypeptide is Maltose/maltodextrin import ATP-binding protein MalK (Yersinia pestis bv. Antiqua (strain Antiqua)).